The sequence spans 266 residues: Interleukin-33 (266 aa).

Residues 1–67 are homeodomain-like HTH domain; the sequence is MRPRMKYSNS…ETSYFRKEPT (67 aa). The propeptide occupies 1 to 101; it reads MRPRMKYSNS…RSLLGSIQAF (101 aa). Residues 66-108 form an interaction with RELA region; sequence PTKRYSLKSGTKHEENFSAYPRDSRKRSLLGSIQAFAASVDTL.

It belongs to the IL-1 family. Highly divergent. In terms of assembly, (Microbial infection) Interacts (in reduced form) with H.polygyrus ARI; the interaction abolishes the interaction with its primary receptor IL1RL1. As to quaternary structure, forms a 1:1:1 heterotrimeric complex with its primary high-affinity receptor IL1RL1 and the coreceptor IL1RAP. Interacts with cargo receptor TMED10; the interaction mediates the translocation from the cytoplasm into the ERGIC (endoplasmic reticulum-Golgi intermediate compartment) and thereby secretion. The full-length protein can be released from cells and is able to signal via the IL1RL1/ST2 receptor. However, proteolytic processing by CELA1, CSTG/cathepsin G and ELANE/neutrophil elastase produces C-terminal peptides that are more active than the unprocessed full-length protein. May also be proteolytically processed by calpains. Proteolytic cleavage mediated by apoptotic caspases including CASP3 and CASP7 results in IL33 inactivation. In vitro proteolytic cleavage by CASP1 was reported but could not be confirmed in vivo suggesting that IL33 is probably not a direct substrate for that caspase.

The protein resides in the nucleus. Its subcellular location is the chromosome. It localises to the cytoplasm. The protein localises to the cytoplasmic vesicle. It is found in the secretory vesicle. The protein resides in the secreted. Functionally, cytokine that binds to and signals through the IL1RL1/ST2 receptor which in turn activates NF-kappa-B and MAPK signaling pathways in target cells. Involved in the maturation of Th2 cells inducing the secretion of T-helper type 2-associated cytokines. Also involved in activation of mast cells, basophils, eosinophils and natural killer cells. Acts as an enhancer of polarization of alternatively activated macrophages. Acts as a chemoattractant for Th2 cells, and may function as an 'alarmin', that amplifies immune responses during tissue injury. Induces rapid UCP2-dependent mitochondrial rewiring that attenuates the generation of reactive oxygen species and preserves the integrity of Krebs cycle required for persistent production of itaconate and subsequent GATA3-dependent differentiation of inflammation-resolving alternatively activated macrophages. In terms of biological role, in quiescent endothelia the uncleaved form is constitutively and abundantly expressed, and acts as a chromatin-associated nuclear factor with transcriptional repressor properties, it may sequester nuclear NF-kappaB/RELA, lowering expression of its targets. This form is rapidely lost upon angiogenic or pro-inflammatory activation. This Mus musculus (Mouse) protein is Interleukin-33.